Here is a 229-residue protein sequence, read N- to C-terminus: Enolase-phosphatase E1 (229 aa).

Mg(2+)-binding residues include Asp7 and Glu9. Substrate contacts are provided by residues Ser122–Ser123 and Lys161. Asp186 is a binding site for Mg(2+).

Belongs to the HAD-like hydrolase superfamily. MasA/MtnC family. Monomer. It depends on Mg(2+) as a cofactor.

It is found in the cytoplasm. It localises to the nucleus. It carries out the reaction 5-methylsulfanyl-2,3-dioxopentyl phosphate + H2O = 1,2-dihydroxy-5-(methylsulfanyl)pent-1-en-3-one + phosphate. The protein operates within amino-acid biosynthesis; L-methionine biosynthesis via salvage pathway; L-methionine from S-methyl-5-thio-alpha-D-ribose 1-phosphate: step 3/6. It participates in amino-acid biosynthesis; L-methionine biosynthesis via salvage pathway; L-methionine from S-methyl-5-thio-alpha-D-ribose 1-phosphate: step 4/6. Functionally, bifunctional enzyme that catalyzes the enolization of 2,3-diketo-5-methylthiopentyl-1-phosphate (DK-MTP-1-P) into the intermediate 2-hydroxy-3-keto-5-methylthiopentenyl-1-phosphate (HK-MTPenyl-1-P), which is then dephosphorylated to form the acireductone 1,2-dihydroxy-3-keto-5-methylthiopentene (DHK-MTPene). In Clavispora lusitaniae (strain ATCC 42720) (Yeast), this protein is Enolase-phosphatase E1.